The following is a 374-amino-acid chain: Chaperone protein DnaJ (374 aa).

Positions 3 to 67 (DFYQILGVSR…ETRARYDQFG (65 aa)) constitute a J domain. Positions 99–118 (GQSSQGGRSQRRGPQQGDDL) are disordered. Over residues 103-115 (QGGRSQRRGPQQG) the composition is skewed to low complexity. The CR-type zinc-finger motif lies at 132–214 (GQQREINIPH…CGGNGVKQVR (83 aa)). Zn(2+) is bound by residues C145, C148, C162, C165, C188, C191, C202, and C205. CXXCXGXG motif repeat units lie at residues 145–152 (CEVCRGTG), 162–169 (CTTCGGSG), 188–195 (CPTCNGVG), and 202–209 (CTSCGGNG).

This sequence belongs to the DnaJ family. Homodimer. Zn(2+) serves as cofactor.

The protein resides in the cytoplasm. Its function is as follows. Participates actively in the response to hyperosmotic and heat shock by preventing the aggregation of stress-denatured proteins and by disaggregating proteins, also in an autonomous, DnaK-independent fashion. Unfolded proteins bind initially to DnaJ; upon interaction with the DnaJ-bound protein, DnaK hydrolyzes its bound ATP, resulting in the formation of a stable complex. GrpE releases ADP from DnaK; ATP binding to DnaK triggers the release of the substrate protein, thus completing the reaction cycle. Several rounds of ATP-dependent interactions between DnaJ, DnaK and GrpE are required for fully efficient folding. Also involved, together with DnaK and GrpE, in the DNA replication of plasmids through activation of initiation proteins. The sequence is that of Chaperone protein DnaJ from Prochlorococcus marinus subsp. pastoris (strain CCMP1986 / NIES-2087 / MED4).